Consider the following 122-residue polypeptide: MIQTESRLEVADNTGAREVMCIKVLGGSKRRYASIGDIIKVSVKEATPRGRVKKGEIYNAVVVRTAKGVRRQDGSLIKFDGNAAVLLNNKLEPIGTRIFGPVTRELRSERFMKIVSLAPEVL.

It belongs to the universal ribosomal protein uL14 family. As to quaternary structure, part of the 50S ribosomal subunit. Forms a cluster with proteins L3 and L19. In the 70S ribosome, L14 and L19 interact and together make contacts with the 16S rRNA in bridges B5 and B8.

Its function is as follows. Binds to 23S rRNA. Forms part of two intersubunit bridges in the 70S ribosome. The chain is Large ribosomal subunit protein uL14 from Burkholderia multivorans (strain ATCC 17616 / 249).